Reading from the N-terminus, the 55-residue chain is Large ribosomal subunit protein bL33 (55 aa).

This sequence belongs to the bacterial ribosomal protein bL33 family.

The polypeptide is Large ribosomal subunit protein bL33 (Chelativorans sp. (strain BNC1)).